Reading from the N-terminus, the 883-residue chain is Phosphoenolpyruvate carboxylase (883 aa).

Catalysis depends on residues His-138 and Lys-546.

It belongs to the PEPCase type 1 family. Mg(2+) is required as a cofactor.

The catalysed reaction is oxaloacetate + phosphate = phosphoenolpyruvate + hydrogencarbonate. In terms of biological role, forms oxaloacetate, a four-carbon dicarboxylic acid source for the tricarboxylic acid cycle. This chain is Phosphoenolpyruvate carboxylase, found in Salmonella paratyphi A (strain ATCC 9150 / SARB42).